Here is a 208-residue protein sequence, read N- to C-terminus: Thiamine-phosphate synthase (208 aa).

4-amino-2-methyl-5-(diphosphooxymethyl)pyrimidine contacts are provided by residues 38 to 42 (QYRSK) and N70. Mg(2+) contacts are provided by D71 and D90. T109 contacts 4-amino-2-methyl-5-(diphosphooxymethyl)pyrimidine. 136-138 (SAT) contacts 2-[(2R,5Z)-2-carboxy-4-methylthiazol-5(2H)-ylidene]ethyl phosphate. K139 is a 4-amino-2-methyl-5-(diphosphooxymethyl)pyrimidine binding site. 2-[(2R,5Z)-2-carboxy-4-methylthiazol-5(2H)-ylidene]ethyl phosphate is bound by residues G166 and 186 to 187 (VS).

Belongs to the thiamine-phosphate synthase family. Mg(2+) is required as a cofactor.

It carries out the reaction 2-[(2R,5Z)-2-carboxy-4-methylthiazol-5(2H)-ylidene]ethyl phosphate + 4-amino-2-methyl-5-(diphosphooxymethyl)pyrimidine + 2 H(+) = thiamine phosphate + CO2 + diphosphate. The catalysed reaction is 2-(2-carboxy-4-methylthiazol-5-yl)ethyl phosphate + 4-amino-2-methyl-5-(diphosphooxymethyl)pyrimidine + 2 H(+) = thiamine phosphate + CO2 + diphosphate. It catalyses the reaction 4-methyl-5-(2-phosphooxyethyl)-thiazole + 4-amino-2-methyl-5-(diphosphooxymethyl)pyrimidine + H(+) = thiamine phosphate + diphosphate. Its pathway is cofactor biosynthesis; thiamine diphosphate biosynthesis; thiamine phosphate from 4-amino-2-methyl-5-diphosphomethylpyrimidine and 4-methyl-5-(2-phosphoethyl)-thiazole: step 1/1. In terms of biological role, condenses 4-methyl-5-(beta-hydroxyethyl)thiazole monophosphate (THZ-P) and 2-methyl-4-amino-5-hydroxymethyl pyrimidine pyrophosphate (HMP-PP) to form thiamine monophosphate (TMP). The protein is Thiamine-phosphate synthase of Aromatoleum aromaticum (strain DSM 19018 / LMG 30748 / EbN1) (Azoarcus sp. (strain EbN1)).